We begin with the raw amino-acid sequence, 190 residues long: Membrane protein FAM174A (190 aa).

A signal peptide spans 1–29 (MPTRRGCSGPCHFLASAFVLLLLPALNQS). Residues asparagine 27 and asparagine 83 are each glycosylated (N-linked (GlcNAc...) asparagine). Over 30–123 (VVLPSTVPRA…NPSDKPMTQR (94 aa)) the chain is Extracellular. The segment at 37 to 119 (PRAVQESKPL…AVSPNPSDKP (83 aa)) is disordered. The chain crosses the membrane as a helical span at residues 124-144 (ALTVLVVVSAAVLVYFVVRTV). Residues 145 to 190 (RMRRRNRKTRRYGVLDTNIENMELTPLEQDDEDDDNTLFDANHPRR) are Cytoplasmic-facing. Residues 168–190 (LTPLEQDDEDDDNTLFDANHPRR) form a disordered region. A compositionally biased stretch (acidic residues) spans 172-181 (EQDDEDDDNT).

This sequence belongs to the FAM174 family.

It localises to the membrane. The chain is Membrane protein FAM174A (Fam174a) from Rattus norvegicus (Rat).